A 1651-amino-acid chain; its full sequence is Roundabout homolog 1 (1651 aa).

The N-terminal stretch at Met1–Ala25 is a signal peptide. Over Gln26–Pro897 the chain is Extracellular. Positions Asp33–Thr57 are disordered. A compositionally biased stretch (polar residues) spans Ile44–Tyr56. Ig-like C2-type domains lie at Pro68–Glu164, Asp170–Thr257, Pro262–Thr346, Pro351–Thr446, and Pro455–Glu541. The cysteines at positions 89 and 147 are disulfide-linked. N-linked (GlcNAc...) asparagine glycosylation is present at Asn160. 3 disulfide bridges follow: Cys191/Cys240, Cys283/Cys330, and Cys372/Cys428. Asn463 carries N-linked (GlcNAc...) asparagine glycosylation. Cysteines 476 and 525 form a disulfide. Fibronectin type-III domains lie at Ala563–Val657, Ala676–Glu773, and Pro778–His874. N-linked (GlcNAc...) asparagine glycans are attached at residues Asn790, Asn820, and Asn827. Residues Ala898–Leu918 form a helical membrane-spanning segment. The Cytoplasmic portion of the chain corresponds to Tyr919 to Ser1651. Position 940 is a phosphoserine (Ser940). Residue Thr948 is modified to Phosphothreonine. Position 1038 is a phosphotyrosine; by ABL; in vitro (Tyr1038). Ser1055 bears the Phosphoserine mark. Phosphotyrosine; by ABL; in vitro occurs at positions 1073 and 1114. Disordered regions lie at residues Lys1124–Tyr1202, Tyr1224–Glu1337, Glu1352–Phe1397, and Arg1420–Ser1651. The segment covering Pro1137–Thr1146 has biased composition (polar residues). A compositionally biased stretch (low complexity) spans Gly1147–Gln1163. Residues Leu1186–His1196 are compositionally biased toward pro residues. Thr1240 bears the Phosphothreonine mark. Positions Tyr1255 to Glu1269 are enriched in polar residues. Basic and acidic residues predominate over residues Glu1281 to Arg1293. Positions Val1296–Pro1307 are enriched in pro residues. Ser1297 carries the post-translational modification Phosphoserine. A compositionally biased stretch (acidic residues) spans Met1322–Met1336. Positions Ser1384 to Phe1397 are enriched in low complexity. Positions Pro1438 to Ser1451 are enriched in polar residues. The segment covering Arg1459–His1470 has biased composition (basic residues). Residues Leu1480 to Ile1490 are compositionally biased toward pro residues. 2 stretches are compositionally biased toward basic and acidic residues: residues Ala1516–Val1541 and Asp1549–Pro1573. Positions Phe1592 to Pro1601 are enriched in polar residues. The span at Ser1602 to Ser1614 shows a compositional bias: low complexity. The span at Asn1642–Ser1651 shows a compositional bias: acidic residues.

The protein belongs to the immunoglobulin superfamily. ROBO family. In terms of assembly, homodimer. Dimerization is mediated by the extracellular domain and is independent of SLIT liganding. Interacts with SLIT1. Interacts with SLIT2. Interacts with FLRT3. Interacts with MYO9B (via Rho-GAP domain). Ubiquitinated. May be deubiquitinated by USP33. In terms of tissue distribution, widely expressed, with exception of kidney.

The protein localises to the cell membrane. It localises to the cell projection. Its subcellular location is the axon. It is found in the endoplasmic reticulum-Golgi intermediate compartment membrane. Functionally, receptor for SLIT1 and SLIT2 that mediates cellular responses to molecular guidance cues in cellular migration, including axonal navigation at the ventral midline of the neural tube and projection of axons to different regions during neuronal development. Interaction with the intracellular domain of FLRT3 mediates axon attraction towards cells expressing NTN1. In axon growth cones, the silencing of the attractive effect of NTN1 by SLIT2 may require the formation of a ROBO1-DCC complex. Plays a role in the regulation of cell migration via its interaction with MYO9B; inhibits MYO9B-mediated stimulation of RHOA GTPase activity, and thereby leads to increased levels of active, GTP-bound RHOA. May be required for lung development. This Homo sapiens (Human) protein is Roundabout homolog 1 (ROBO1).